Reading from the N-terminus, the 382-residue chain is Diphosphomevalonate decarboxylase ERG19 (382 aa).

(R)-5-diphosphomevalonate is bound by residues 22–25 (YWGK), Arg78, 157–162 (SGSACR), and Thr213.

Belongs to the diphosphomevalonate decarboxylase family. In terms of assembly, homodimer.

The enzyme catalyses (R)-5-diphosphomevalonate + ATP = isopentenyl diphosphate + ADP + phosphate + CO2. It participates in isoprenoid biosynthesis; isopentenyl diphosphate biosynthesis via mevalonate pathway; isopentenyl diphosphate from (R)-mevalonate: step 3/3. Functionally, diphosphomevalonate decarboxylase; part of the second module of ergosterol biosynthesis pathway that includes the middle steps of the pathway. MVD1 converts diphosphomevalonate into isopentenyl diphosphate. The second module is carried out in the vacuole and involves the formation of farnesyl diphosphate, which is also an important intermediate in the biosynthesis of ubiquinone, dolichol, heme and prenylated proteins. Activity by the mevalonate kinase ERG12 (FG05912) first converts mevalonate into 5-phosphomevalonate. 5-phosphomevalonate is then further converted to 5-diphosphomevalonate by the phosphomevalonate kinase ERG8 (FG09764). The diphosphomevalonate decarboxylase ERG19 (FG10424) then produces isopentenyl diphosphate. The isopentenyl-diphosphate delta-isomerase IDI1 (FG09722) then catalyzes the 1,3-allylic rearrangement of the homoallylic substrate isopentenyl (IPP) to its highly electrophilic allylic isomer, dimethylallyl diphosphate (DMAPP). Finally the farnesyl diphosphate synthase ERG20 (FG06784) catalyzes the sequential condensation of isopentenyl pyrophosphate with dimethylallyl pyrophosphate, and then with the resultant geranylpyrophosphate to the ultimate product farnesyl pyrophosphate. This Gibberella zeae (strain ATCC MYA-4620 / CBS 123657 / FGSC 9075 / NRRL 31084 / PH-1) (Wheat head blight fungus) protein is Diphosphomevalonate decarboxylase ERG19.